The following is a 182-amino-acid chain: uncharacterized protein (182 aa).

Positions 1 to 177 (MEFSVGGVEV…KFLEVFKKHL (177 aa)) constitute a Macro domain.

This is an uncharacterized protein from Pyrobaculum aerophilum (strain ATCC 51768 / DSM 7523 / JCM 9630 / CIP 104966 / NBRC 100827 / IM2).